The sequence spans 178 residues: Bifunctional protein PyrR (178 aa).

Positions 99–111 (VVLVDDVIYTGRT) match the PRPP-binding motif.

Belongs to the purine/pyrimidine phosphoribosyltransferase family. PyrR subfamily. Homodimer and homohexamer; in equilibrium.

The enzyme catalyses UMP + diphosphate = 5-phospho-alpha-D-ribose 1-diphosphate + uracil. Functionally, regulates transcriptional attenuation of the pyrimidine nucleotide (pyr) operon by binding in a uridine-dependent manner to specific sites on pyr mRNA. This disrupts an antiterminator hairpin in the RNA and favors formation of a downstream transcription terminator, leading to a reduced expression of downstream genes. Its function is as follows. Also displays a weak uracil phosphoribosyltransferase activity which is not physiologically significant. This chain is Bifunctional protein PyrR, found in Thermoanaerobacter pseudethanolicus (strain ATCC 33223 / 39E) (Clostridium thermohydrosulfuricum).